Reading from the N-terminus, the 435-residue chain is Xylose isomerase (435 aa).

Catalysis depends on residues His99 and Asp102. Residues Glu230, Glu266, His269, Asp294, Asp305, Asp307, and Asp337 each coordinate Mg(2+).

The protein belongs to the xylose isomerase family. Homotetramer. Mg(2+) serves as cofactor.

The protein localises to the cytoplasm. The enzyme catalyses alpha-D-xylose = alpha-D-xylulofuranose. This is Xylose isomerase from Listeria welshimeri serovar 6b (strain ATCC 35897 / DSM 20650 / CCUG 15529 / CIP 8149 / NCTC 11857 / SLCC 5334 / V8).